The sequence spans 515 residues: Histidine ammonia-lyase (515 aa).

Positions alanine 145–glycine 147 form a cross-link, 5-imidazolinone (Ala-Gly). Serine 146 carries the 2,3-didehydroalanine (Ser) modification.

It belongs to the PAL/histidase family. Post-translationally, contains an active site 4-methylidene-imidazol-5-one (MIO), which is formed autocatalytically by cyclization and dehydration of residues Ala-Ser-Gly.

It localises to the cytoplasm. It carries out the reaction L-histidine = trans-urocanate + NH4(+). Its pathway is amino-acid degradation; L-histidine degradation into L-glutamate; N-formimidoyl-L-glutamate from L-histidine: step 1/3. In Gluconobacter oxydans (strain 621H) (Gluconobacter suboxydans), this protein is Histidine ammonia-lyase.